The sequence spans 69 residues: U-Asilidin(12)-Dg3b (69 aa).

The signal sequence occupies residues 1-19 (MRFLNIFLFFAVMIAFVSA). The propeptide occupies 20–33 (SPVLEEEEIDIEPR). 3 disulfides stabilise this stretch: Cys-36-Cys-59, Cys-45-Cys-65, and Cys-49-Cys-67.

The protein belongs to the asilidin-12 family. As to expression, expressed by the venom gland.

It is found in the secreted. In terms of biological role, the recombinant peptide moderately increases Kv11.1/KCNH2/ERG1 currents and shifts the voltage-dependence of the channel activation to hyperpolarised potentials. In vivo, induces neurotoxic effects when injected into insects (tested on L.cuprina and A.domesticus). This is U-Asilidin(12)-Dg3b from Dolopus genitalis (Giant Australian assassin fly).